Reading from the N-terminus, the 327-residue chain is 4-hydroxy-2-oxoglutarate aldolase, mitochondrial (327 aa).

The transit peptide at 1 to 25 directs the protein to the mitochondrion; the sequence is MLGPQVWSSVRQGLSRSLSRNVGVW. 77-78 is a substrate binding site; the sequence is SN. Lysine 196 (schiff-base intermediate with substrate) is an active-site residue. The substrate site is built by serine 198 and glycine 222.

The protein belongs to the DapA family. In terms of assembly, homotetramer.

It localises to the mitochondrion. It carries out the reaction (4S)-4-hydroxy-2-oxoglutarate = glyoxylate + pyruvate. It catalyses the reaction (4R)-4-hydroxy-2-oxoglutarate = glyoxylate + pyruvate. Its activity is regulated as follows. Inhibited by divalent cations. Catalyzes the final step in the metabolic pathway of hydroxyproline. This Homo sapiens (Human) protein is 4-hydroxy-2-oxoglutarate aldolase, mitochondrial (HOGA1).